The chain runs to 417 residues: Gamma-glutamyl phosphate reductase (417 aa).

This sequence belongs to the gamma-glutamyl phosphate reductase family.

Its subcellular location is the cytoplasm. It carries out the reaction L-glutamate 5-semialdehyde + phosphate + NADP(+) = L-glutamyl 5-phosphate + NADPH + H(+). It functions in the pathway amino-acid biosynthesis; L-proline biosynthesis; L-glutamate 5-semialdehyde from L-glutamate: step 2/2. Catalyzes the NADPH-dependent reduction of L-glutamate 5-phosphate into L-glutamate 5-semialdehyde and phosphate. The product spontaneously undergoes cyclization to form 1-pyrroline-5-carboxylate. In Legionella pneumophila (strain Paris), this protein is Gamma-glutamyl phosphate reductase.